The following is a 273-amino-acid chain: Dermonecrotic toxin LapSicTox-alphaIB1b3 (273 aa).

Residue His5 is part of the active site. Glu25 and Asp27 together coordinate Mg(2+). Catalysis depends on His41, which acts as the Nucleophile. 2 cysteine pairs are disulfide-bonded: Cys45-Cys51 and Cys47-Cys190. Asp85 lines the Mg(2+) pocket. An N-linked (GlcNAc...) asparagine glycan is attached at Asn250.

It belongs to the arthropod phospholipase D family. Class II subfamily. Mg(2+) serves as cofactor. Expressed by the venom gland.

Its subcellular location is the secreted. The catalysed reaction is an N-(acyl)-sphingosylphosphocholine = an N-(acyl)-sphingosyl-1,3-cyclic phosphate + choline. It carries out the reaction an N-(acyl)-sphingosylphosphoethanolamine = an N-(acyl)-sphingosyl-1,3-cyclic phosphate + ethanolamine. The enzyme catalyses a 1-acyl-sn-glycero-3-phosphocholine = a 1-acyl-sn-glycero-2,3-cyclic phosphate + choline. It catalyses the reaction a 1-acyl-sn-glycero-3-phosphoethanolamine = a 1-acyl-sn-glycero-2,3-cyclic phosphate + ethanolamine. Its function is as follows. Dermonecrotic toxins cleave the phosphodiester linkage between the phosphate and headgroup of certain phospholipids (sphingolipid and lysolipid substrates), forming an alcohol (often choline) and a cyclic phosphate. This toxin acts on sphingomyelin (SM). It may also act on ceramide phosphoethanolamine (CPE), lysophosphatidylcholine (LPC) and lysophosphatidylethanolamine (LPE), but not on lysophosphatidylserine (LPS), and lysophosphatidylglycerol (LPG). It acts by transphosphatidylation, releasing exclusively cyclic phosphate products as second products. Induces dermonecrosis, hemolysis, increased vascular permeability, edema, inflammatory response, and platelet aggregation. This is Dermonecrotic toxin LapSicTox-alphaIB1b3 from Loxosceles apachea (Apache recluse spider).